A 267-amino-acid chain; its full sequence is Shikimate dehydrogenase (NADP(+)) (267 aa).

Shikimate is bound by residues 14-16 (SLS) and Thr61. The Proton acceptor role is filled by Lys65. Shikimate-binding residues include Asn86 and Asp101. Residues 126–130 (GAGGA), 150–155 (NRTHSK), and Leu213 contribute to the NADP(+) site. Tyr215 lines the shikimate pocket. Gly236 lines the NADP(+) pocket.

Belongs to the shikimate dehydrogenase family. Homodimer.

The catalysed reaction is shikimate + NADP(+) = 3-dehydroshikimate + NADPH + H(+). It participates in metabolic intermediate biosynthesis; chorismate biosynthesis; chorismate from D-erythrose 4-phosphate and phosphoenolpyruvate: step 4/7. Its function is as follows. Involved in the biosynthesis of the chorismate, which leads to the biosynthesis of aromatic amino acids. Catalyzes the reversible NADPH linked reduction of 3-dehydroshikimate (DHSA) to yield shikimate (SA). The protein is Shikimate dehydrogenase (NADP(+)) of Vesicomyosocius okutanii subsp. Calyptogena okutanii (strain HA).